A 267-amino-acid polypeptide reads, in one-letter code: Tryptophan synthase alpha chain (267 aa).

Catalysis depends on proton acceptor residues Glu47 and Asp58.

It belongs to the TrpA family. Tetramer of two alpha and two beta chains.

The catalysed reaction is (1S,2R)-1-C-(indol-3-yl)glycerol 3-phosphate + L-serine = D-glyceraldehyde 3-phosphate + L-tryptophan + H2O. Its pathway is amino-acid biosynthesis; L-tryptophan biosynthesis; L-tryptophan from chorismate: step 5/5. In terms of biological role, the alpha subunit is responsible for the aldol cleavage of indoleglycerol phosphate to indole and glyceraldehyde 3-phosphate. This is Tryptophan synthase alpha chain from Chlorobium phaeobacteroides (strain DSM 266 / SMG 266 / 2430).